Reading from the N-terminus, the 444-residue chain is 23S rRNA (uracil(1939)-C(5))-methyltransferase RlmD (444 aa).

Residues 5 to 67 form the TRAM domain; that stretch reads RNRLDRTPFQ…RHFDEAKTVG (63 aa). 4 residues coordinate [4Fe-4S] cluster: Cys-80, Cys-86, Cys-89, and Cys-168. S-adenosyl-L-methionine is bound by residues Gln-276, Phe-305, Asn-310, Glu-326, Asp-353, and Asp-374. Cys-400 (nucleophile) is an active-site residue.

Belongs to the class I-like SAM-binding methyltransferase superfamily. RNA M5U methyltransferase family. RlmD subfamily.

It carries out the reaction uridine(1939) in 23S rRNA + S-adenosyl-L-methionine = 5-methyluridine(1939) in 23S rRNA + S-adenosyl-L-homocysteine + H(+). Its function is as follows. Catalyzes the formation of 5-methyl-uridine at position 1939 (m5U1939) in 23S rRNA. The protein is 23S rRNA (uracil(1939)-C(5))-methyltransferase RlmD of Xanthomonas axonopodis pv. citri (strain 306).